The following is a 462-amino-acid chain: Alkaline phosphatase 3 (462 aa).

An N-terminal signal peptide occupies residues 1–32 (MKKFPKKLLPIAVLSSIAFSSLASGSVPEASA). Asp52 is a binding site for Mg(2+). Position 52 (Asp52) interacts with Zn(2+). The active-site Phosphoserine intermediate is Ser101. Thr154 and Glu275 together coordinate Mg(2+). 5 residues coordinate Zn(2+): Asp280, His284, Asp322, His323, and His419.

It belongs to the alkaline phosphatase family. As to quaternary structure, monomer. Mg(2+) is required as a cofactor. It depends on Zn(2+) as a cofactor.

It carries out the reaction a phosphate monoester + H2O = an alcohol + phosphate. This chain is Alkaline phosphatase 3 (phoB), found in Bacillus subtilis (strain 168).